An 875-amino-acid chain; its full sequence is Phospholipase DDHD1 (875 aa).

Disordered regions lie at residues 1 to 30 (MNYP…LGSD), 101 to 153 (LRYY…GAAA), and 206 to 231 (RAQD…SVED). A phosphoserine mark is found at S8 and S11. Gly residues predominate over residues 130-140 (SGGGGAAGGGP). Positions 217 to 228 (GPASPAGPASSS) are enriched in low complexity. S540 is a catalytic residue. One can recognise a DDHD domain in the interval 614–861 (LKFKVENFFC…ALFLLTFMYK (248 aa)). Residue S726 is modified to Phosphoserine. The interval 770 to 804 (RSSASQPSETSRDSIEDEKKPVASPPMTTVATQTL) is disordered. The span at 779-790 (TSRDSIEDEKKP) shows a compositional bias: basic and acidic residues. Polar residues predominate over residues 795–804 (PMTTVATQTL).

The protein belongs to the PA-PLA1 family. In terms of assembly, forms homooligomers and, to a much smaller extent, heterooligomers with DDHD2. Interacts with SEC23A and SEC24C. As to expression, expressed in mature testis.

The protein resides in the cytoplasm. The catalysed reaction is a 1,2-diacyl-sn-glycero-3-phosphate + H2O = a 2-acyl-sn-glycerol 3-phosphate + a fatty acid + H(+). The enzyme catalyses a 1,2-diacyl-sn-glycero-3-phospho-(1D-myo-inositol) + H2O = a 2-acyl-sn-glycero-3-phospho-D-myo-inositol + a fatty acid + H(+). It carries out the reaction 1-octadecanoyl-2-(5Z,8Z,11Z,14Z-eicosatetraenoyl)-sn-glycero-3-phospho-(1D-myo-inositol) + H2O = 2-(5Z,8Z,11Z,14Z-eicosatetraenoyl)-sn-glycero-3-phospho-(1D-myo-inositol) + octadecanoate + H(+). It catalyses the reaction a 1-acyl-2-(5Z,8Z,11Z,14Z-eicosatetraenoyl)-sn-glycero-3-phospho-(1D-myo-inositol) + H2O = 2-(5Z,8Z,11Z,14Z-eicosatetraenoyl)-sn-glycero-3-phospho-(1D-myo-inositol) + a fatty acid + H(+). The catalysed reaction is 1,2-dihexadecanoyl-sn-glycero-3-phospho-(1D-myo-inositol) + H2O = 2-hexadecanoyl-sn-glycero-3-phospho-(1D-myo-inositol) + hexadecanoate + H(+). The enzyme catalyses 1,2-di-(9Z-octadecenoyl)-sn-glycero-3-phosphate + H2O = 2-(9Z-octadecenoyl)-sn-glycero-3-phosphate + (9Z)-octadecenoate + H(+). It carries out the reaction a 1-acyl-2-(5Z,8Z,11Z,14Z)-eicosatetraenoyl-sn-glycero-3-phosphate + H2O = 2-(5Z,8Z,11Z,14Z-eicosatetraenoyl)-sn-glycero-3-phosphate + a fatty acid + H(+). It catalyses the reaction 1-hexadecanoyl-2-(9Z-octadecenoyl)-sn-glycero-3-phosphate + H2O = 2-(9Z-octadecenoyl)-sn-glycero-3-phosphate + hexadecanoate + H(+). The catalysed reaction is 1-hexadecanoyl-2-(9Z-octadecenoyl)-sn-glycero-3-phospho-L-serine + H2O = 2-(9Z-octadecenoyl)-sn-glycero-3-phospho-L-serine + hexadecanoate + H(+). The enzyme catalyses 1,2-di-(5Z,8Z,11Z,14Z)-eicosatetraenoyl-sn-glycero-3-phosphate + H2O = 2-(5Z,8Z,11Z,14Z-eicosatetraenoyl)-sn-glycero-3-phosphate + (5Z,8Z,11Z,14Z)-eicosatetraenoate + H(+). It carries out the reaction 1-octadecanoyl-2-(5Z,8Z,11Z,14Z-eicosatetraenoyl)-sn-glycero-3-phosphate + H2O = 2-(5Z,8Z,11Z,14Z-eicosatetraenoyl)-sn-glycero-3-phosphate + octadecanoate + H(+). It catalyses the reaction a 1,2-diacyl-sn-glycero-3-phosphocholine + H2O = a 2-acyl-sn-glycero-3-phosphocholine + a fatty acid + H(+). The catalysed reaction is a 1,2-diacyl-sn-glycero-3-phosphoethanolamine + H2O = a 2-acyl-sn-glycero-3-phosphoethanolamine + a fatty acid + H(+). The enzyme catalyses a 1,2-diacyl-sn-glycero-3-phospho-L-serine + H2O = a 2-acyl-sn-glycero-3-phospho-L-serine + a fatty acid + H(+). It carries out the reaction a 1,2-diacyl-sn-glycero-3-phospho-(1'-sn-glycerol) + H2O = 2-acyl-sn-glycero-3-phospho-(1'-sn-glycerol) + a fatty acid + H(+). It catalyses the reaction 1-hexadecanoyl-2-(9Z-octadecenoyl)-sn-glycero-3-phospho-(1'-sn-glycerol) + H2O = 2-(9Z-octadecenoyl)-sn-glycero-3-phospho-(1'-sn-glycerol) + hexadecanoate + H(+). The catalysed reaction is 1-acyl-2-(5Z,8Z,11Z,14Z-eicosatetraenoyl)-sn-glycero-3-phosphocholine + H2O = 2-(5Z,8Z,11Z,14Z)-eicosatetraenoyl-sn-glycero-3-phosphocholine + a fatty acid + H(+). The enzyme catalyses 1-acyl-2-(5Z,8Z,11Z,14Z)-eicosatetraenoyl-sn-glycero-3-phosphoethanolamine + H2O = 2-(5Z,8Z,11Z,14Z)-eicosatetraenoyl-sn-glycero-3-phosphoethanolamine + a fatty acid + H(+). It carries out the reaction 1-(9Z-octadecenoyl)-2-(7Z,10Z,13Z,16Z,19Z-docosapentaenoyl)-sn-glycero-3-phospho-1D-myo-inositol + H2O = 2-(7Z,10Z,13Z,16Z,19Z-docosapentaenoyl)-sn-glycero-3-phospho-1D-myo-inositol + (9Z)-octadecenoate + H(+). It catalyses the reaction 1-(9Z-octadecenoyl)-2-(5Z,8Z,11Z,14Z-eicosatetraenoyl)-sn-glycero-3-phospho-1D-myo-inositol + H2O = 2-(5Z,8Z,11Z,14Z-eicosatetraenoyl)-sn-glycero-3-phospho-(1D-myo-inositol) + (9Z)-octadecenoate + H(+). The catalysed reaction is 1,2-di-(9Z-octadecenoyl)-sn-glycero-3-phospho-1D-myo-inositol + H2O = 2-(9Z-octadecenoyl)-sn-glycero-3-phospho-1D-myo-inositol + (9Z)-octadecenoate + H(+). The enzyme catalyses 1-(9Z-octadecenoyl)-2-(8Z,11Z,14Z-eicosatrienoyl)-sn-glycero-3-phospho-1D-myo-inositol + H2O = 2-(8Z,11Z,14Z-eicosatrienoyl)-sn-glycero-3-phospho-1D-myo-inositol + (9Z)-octadecenoate + H(+). It carries out the reaction 1,2-di-(9Z-octadecenoyl)-sn-glycero-3-phosphocholine + H2O = (9Z-octadecenoyl)-sn-glycero-3-phosphocholine + (9Z)-octadecenoate + H(+). Its pathway is phospholipid metabolism; phosphatidylinositol metabolism. Functionally, phospholipase A1 (PLA1) that hydrolyzes ester bonds at the sn-1 position of glycerophospholipids producing a free fatty acid and a lysophospholipid. Prefers phosphatidate (1,2-diacyl-sn-glycero-3-phosphate, PA) as substrate in vitro, but can efficiently hydrolyze phosphatidylinositol (1,2-diacyl-sn-glycero-3-phospho-(1D-myo-inositol), PI), as well as a range of other glycerophospholipid substrates such as phosphatidylcholine (1,2-diacyl-sn-glycero-3-phosphocholine, PC), phosphatidylethanolamine (1,2-diacyl-sn-glycero-3-phosphoethanolamine, PE), phosphatidylserine (1,2-diacyl-sn-glycero-3-phospho-L-serine, PS) and phosphatidylglycerol (1,2-diacyl-sn-glycero-3-phospho-(1'-sn-glycerol), PG). Involved in the regulation of the endogenous content of polyunsaturated PI and PS lipids in the nervous system. Changes in these lipids extend to downstream metabolic products like PI phosphates PIP and PIP2, which play fundamental roles in cell biology. Regulates mitochondrial morphology. These dynamic changes may be due to PA hydrolysis at the mitochondrial surface. May play a regulatory role in spermatogenesis or sperm function. The protein is Phospholipase DDHD1 (DDHD1) of Bos taurus (Bovine).